Reading from the N-terminus, the 222-residue chain is Ribosomal RNA small subunit methyltransferase I (222 aa).

Belongs to the methyltransferase superfamily. RsmI family.

It is found in the cytoplasm. It catalyses the reaction cytidine(1402) in 16S rRNA + S-adenosyl-L-methionine = 2'-O-methylcytidine(1402) in 16S rRNA + S-adenosyl-L-homocysteine + H(+). In terms of biological role, catalyzes the 2'-O-methylation of the ribose of cytidine 1402 (C1402) in 16S rRNA. This is Ribosomal RNA small subunit methyltransferase I from Mycoplasmopsis pulmonis (strain UAB CTIP) (Mycoplasma pulmonis).